The following is a 156-amino-acid chain: Arginine repressor (156 aa).

The protein belongs to the ArgR family.

It localises to the cytoplasm. It functions in the pathway amino-acid biosynthesis; L-arginine biosynthesis [regulation]. In terms of biological role, regulates arginine biosynthesis genes. The protein is Arginine repressor of Salmonella paratyphi C (strain RKS4594).